Reading from the N-terminus, the 365-residue chain is Gibberellin 20 oxidase 1-B (365 aa).

The Fe2OG dioxygenase domain occupies 199 to 299 (GNDSIMRLNY…RKSLAFFLCP (101 aa)). Fe cation contacts are provided by histidine 224, aspartate 226, and histidine 280. Arginine 290 is a catalytic residue.

It belongs to the iron/ascorbate-dependent oxidoreductase family. GA20OX subfamily. It depends on Fe cation as a cofactor. L-ascorbate serves as cofactor. Not detected in nodes and the ear of the elongating stem.

It carries out the reaction gibberellin A12 + 2 2-oxoglutarate + 3 O2 + H(+) = gibberellin A9 + 2 succinate + 3 CO2 + 2 H2O. It catalyses the reaction gibberellin A53 + 2 2-oxoglutarate + 3 O2 + H(+) = gibberellin A20 + 2 succinate + 3 CO2 + 2 H2O. Its function is as follows. Key oxidase enzyme in the biosynthesis of gibberellin that catalyzes the conversion of GA12 and GA53 to GA9 and GA20 respectively, via a three-step oxidation at C-20 of the GA skeleton. The sequence is that of Gibberellin 20 oxidase 1-B (GA20ox1B) from Triticum aestivum (Wheat).